The following is a 475-amino-acid chain: tRNA-2-methylthio-N(6)-dimethylallyladenosine synthase (475 aa).

One can recognise an MTTase N-terminal domain in the interval R7–D127. [4Fe-4S] cluster-binding residues include C16, C52, C90, C168, C172, and C175. Residues R154–Q388 enclose the Radical SAM core domain. One can recognise a TRAM domain in the interval R394–S456.

This sequence belongs to the methylthiotransferase family. MiaB subfamily. Monomer. Requires [4Fe-4S] cluster as cofactor.

It is found in the cytoplasm. It catalyses the reaction N(6)-dimethylallyladenosine(37) in tRNA + (sulfur carrier)-SH + AH2 + 2 S-adenosyl-L-methionine = 2-methylsulfanyl-N(6)-dimethylallyladenosine(37) in tRNA + (sulfur carrier)-H + 5'-deoxyadenosine + L-methionine + A + S-adenosyl-L-homocysteine + 2 H(+). Its function is as follows. Catalyzes the methylthiolation of N6-(dimethylallyl)adenosine (i(6)A), leading to the formation of 2-methylthio-N6-(dimethylallyl)adenosine (ms(2)i(6)A) at position 37 in tRNAs that read codons beginning with uridine. This Afipia carboxidovorans (strain ATCC 49405 / DSM 1227 / KCTC 32145 / OM5) (Oligotropha carboxidovorans) protein is tRNA-2-methylthio-N(6)-dimethylallyladenosine synthase.